Reading from the N-terminus, the 206-residue chain is High frequency lysogenization protein HflD homolog (206 aa).

This sequence belongs to the HflD family.

The protein resides in the cytoplasm. It localises to the cell inner membrane. The sequence is that of High frequency lysogenization protein HflD homolog from Marinobacter nauticus (strain ATCC 700491 / DSM 11845 / VT8) (Marinobacter aquaeolei).